The sequence spans 326 residues: tRNA-modifying protein YgfZ (326 aa).

Folate contacts are provided by tryptophan 27 and tryptophan 189.

It belongs to the tRNA-modifying YgfZ family.

The protein localises to the cytoplasm. Its function is as follows. Folate-binding protein involved in regulating the level of ATP-DnaA and in the modification of some tRNAs. It is probably a key factor in regulatory networks that act via tRNA modification, such as initiation of chromosomal replication. The sequence is that of tRNA-modifying protein YgfZ from Shigella boydii serotype 4 (strain Sb227).